Consider the following 379-residue polypeptide: Homoserine O-succinyltransferase (379 aa).

Positions 48–357 (NAVLICHALS…SAHGHDAFLM (310 aa)) constitute an AB hydrolase-1 domain. The active-site Nucleophile is the Ser-154. Residue Arg-224 participates in substrate binding. Residues Asp-319 and His-352 contribute to the active site. Asp-353 contributes to the substrate binding site.

Belongs to the AB hydrolase superfamily. MetX family. Homodimer.

The protein resides in the cytoplasm. It carries out the reaction L-homoserine + succinyl-CoA = O-succinyl-L-homoserine + CoA. It functions in the pathway amino-acid biosynthesis; L-methionine biosynthesis via de novo pathway; O-succinyl-L-homoserine from L-homoserine: step 1/1. Its function is as follows. Transfers a succinyl group from succinyl-CoA to L-homoserine, forming succinyl-L-homoserine. The chain is Homoserine O-succinyltransferase from Neisseria meningitidis serogroup B (strain ATCC BAA-335 / MC58).